The following is a 574-amino-acid chain: MRWSRCYIPTLKEAPSDAEVVSHKLLVRAGMIRKLTSGIYTFMPMGLRALNKVAAIVREEMNRAGAQEVLMPMVQPADLWQETGRWEFYGKELLRFRDRNDRDYCLGPTHEEVITDLVRGEVRSYRQLPINLYQIQTKFRDEIRPRFGLMRGREFVMKDAYSFDRDQAGCDESYKAMYTAYQRIFSRLGLRFRAVEADSGSIGGSFSHEFMVLADTGEDTLAVCTACEYAANVERAEVTGTPCTRPAAAALAEVPTPGAHTIEEVSAFLGVSADMLVKTLLFVADGEPVAALVRGDRELNEVKLKNLLGADSLELATPEQVEAWTGAPVGFAGPVGLHGVKRVFADTELEGDAGWIVGANKADTHLREVSLTRDAAIEAYADLRMITASDPCPRCGGAVELPKGIEVGHVFKLGLKYSKSMNATFLDENGKEQVMVMGCYGIGVSRVVASCIEQNNDGDGIVFPPPIAPYEVALLLLDPKNEEAAAKAAEIESFLEAEGHDVLLDDRDERPGVKFKDADLIGSPYQLVLGGKGLARGVVEAKNRRSGEKTELPVEGFAEAFRDWRAGVLKGWGL.

It belongs to the class-II aminoacyl-tRNA synthetase family. ProS type 1 subfamily. In terms of assembly, homodimer.

The protein resides in the cytoplasm. It catalyses the reaction tRNA(Pro) + L-proline + ATP = L-prolyl-tRNA(Pro) + AMP + diphosphate. Catalyzes the attachment of proline to tRNA(Pro) in a two-step reaction: proline is first activated by ATP to form Pro-AMP and then transferred to the acceptor end of tRNA(Pro). As ProRS can inadvertently accommodate and process non-cognate amino acids such as alanine and cysteine, to avoid such errors it has two additional distinct editing activities against alanine. One activity is designated as 'pretransfer' editing and involves the tRNA(Pro)-independent hydrolysis of activated Ala-AMP. The other activity is designated 'posttransfer' editing and involves deacylation of mischarged Ala-tRNA(Pro). The misacylated Cys-tRNA(Pro) is not edited by ProRS. This is Proline--tRNA ligase from Nitratidesulfovibrio vulgaris (strain DP4) (Desulfovibrio vulgaris).